Consider the following 441-residue polypeptide: Eukaryotic translation initiation factor 3 subunit E (441 aa).

The PCI domain maps to 223 to 407 (IFFNHDNGRT…GTVIMEPTQP (185 aa)).

Belongs to the eIF-3 subunit E family. In terms of assembly, component of the eukaryotic translation initiation factor 3 (eIF-3) complex (Potential). Binds to the translation initiation factors TIF3F1 and TIF3H1. Associates with the CSN (COP9 signalosome) complex. Interacts directly with CSN1, CSN4, CSN6A, CSN6B, CSN7, CSN8 and TIF3C1. Binds to 40S small ribosomal subunit S9 (RPS9B and RPS9C) via its N-terminal part. Interacts with the 26S proteasome subunit RPN12a via its C-terminal part. Also binds with At1g27930 and At4g30620.

Its subcellular location is the cytoplasm. It is found in the nucleus. Functionally, component of the eukaryotic translation initiation factor 3 (eIF-3) complex, which is involved in protein synthesis of a specialized repertoire of mRNAs and, together with other initiation factors, stimulates binding of mRNA and methionyl-tRNAi to the 40S ribosome. The eIF-3 complex specifically targets and initiates translation of a subset of mRNAs involved in cell proliferation (Potential). Negatively regulates translation during flower development. This chain is Eukaryotic translation initiation factor 3 subunit E, found in Arabidopsis thaliana (Mouse-ear cress).